A 474-amino-acid polypeptide reads, in one-letter code: Mercuric reductase (474 aa).

Residues alanine 19, glycine 39, and threonine 44 each coordinate FAD. The cysteines at positions 45 and 50 are disulfide-linked. 4 residues coordinate FAD: lysine 54, alanine 119, aspartate 315, and valine 323. Positions 471 and 472 each coordinate Hg(2+).

This sequence belongs to the class-I pyridine nucleotide-disulfide oxidoreductase family. Homodimer. FAD is required as a cofactor.

The catalysed reaction is Hg + NADP(+) + H(+) = Hg(2+) + NADPH. Functionally, resistance to Hg(2+) in bacteria appears to be governed by a specialized system which includes mercuric reductase. MerA protein is responsible for volatilizing mercury as Hg(0). The sequence is that of Mercuric reductase (merA) from Streptomyces lividans.